Consider the following 469-residue polypeptide: Protein HEAT STRESS TOLERANT DWD 1 (469 aa).

Residues 1 to 15 (MGRNVKTKAKRKNKK) are compositionally biased toward basic residues. Disordered stretches follow at residues 1–29 (MGRN…SIPT) and 115–150 (DVVP…KTPN). Over residues 124 to 143 (GEDEDEDDEDDSDSDDDDGD) the composition is skewed to acidic residues. WD repeat units follow at residues 157–197 (AHHG…NALA), 221–261 (GHKD…WAVD), 267–307 (GHTA…SPAL), 311–351 (AHNA…GGDA), 358–398 (YHKH…DEEE), and 425–464 (QGQK…NTLP).

The protein belongs to the WD repeat RBAP46/RBAP48/MSI1 family. As to quaternary structure, probable component of CULLIN4 (CUL4) RING ligase (CRL4) complexes. Interacts with DDB1A and DDB1B. Associates with HSP90-1.

It participates in protein modification; protein ubiquitination. Its function is as follows. Probable substrate receptor of CRL4 E3 ligase complexes acting as negative regulators of thermotolerance by disturbing the action of HSP90-1 and by preventing the expression of heat-inducible genes (e.g. HSP14.7, HSP21, At2g03020 and WRKY28). The chain is Protein HEAT STRESS TOLERANT DWD 1 from Arabidopsis thaliana (Mouse-ear cress).